Here is a 675-residue protein sequence, read N- to C-terminus: DNA ligase (675 aa).

NAD(+) contacts are provided by residues 36-40, 85-86, and Glu117; these read DAAYD and SL. Lys119 serves as the catalytic N6-AMP-lysine intermediate. NAD(+)-binding residues include Arg140, Glu177, Lys294, and Lys318. The Zn(2+) site is built by Cys412, Cys415, Cys430, and Cys436. The BRCT domain occupies 597–675; sequence AEDLPLSGNT…EAEFLELIGE (79 aa).

It belongs to the NAD-dependent DNA ligase family. LigA subfamily. Requires Mg(2+) as cofactor. Mn(2+) serves as cofactor.

It catalyses the reaction NAD(+) + (deoxyribonucleotide)n-3'-hydroxyl + 5'-phospho-(deoxyribonucleotide)m = (deoxyribonucleotide)n+m + AMP + beta-nicotinamide D-nucleotide.. In terms of biological role, DNA ligase that catalyzes the formation of phosphodiester linkages between 5'-phosphoryl and 3'-hydroxyl groups in double-stranded DNA using NAD as a coenzyme and as the energy source for the reaction. It is essential for DNA replication and repair of damaged DNA. This is DNA ligase from Thioalkalivibrio sulfidiphilus (strain HL-EbGR7).